The sequence spans 338 residues: UDP-glucose 4-epimerase (338 aa).

Residues 11–12 (YI), 31–36 (DNLCNS), 58–59 (DI), 80–84 (FAGLK), asparagine 99, serine 124, tyrosine 149, lysine 153, and phenylalanine 178 each bind NAD(+). Residues serine 124 and tyrosine 149 each coordinate substrate. Catalysis depends on tyrosine 149, which acts as the Proton acceptor. Residues asparagine 179, 199–200 (NL), 216–218 (SVF), arginine 231, and 292–295 (RSGD) each bind substrate.

The protein belongs to the NAD(P)-dependent epimerase/dehydratase family. As to quaternary structure, homodimer. It depends on NAD(+) as a cofactor.

It carries out the reaction UDP-alpha-D-glucose = UDP-alpha-D-galactose. The protein operates within carbohydrate metabolism; galactose metabolism. Functionally, involved in the metabolism of galactose. Catalyzes the conversion of UDP-galactose (UDP-Gal) to UDP-glucose (UDP-Glc) through a mechanism involving the transient reduction of NAD. By controlling the internal galactose concentration, it may be linked to the biosynthesis of lipopolysaccharide surface molecules, which are important for the pathogenesis of H.influenzae. This is UDP-glucose 4-epimerase (galE) from Haemophilus influenzae (strain ATCC 51907 / DSM 11121 / KW20 / Rd).